A 143-amino-acid polypeptide reads, in one-letter code: Transcriptional regulator MraZ (143 aa).

2 SpoVT-AbrB domains span residues 5–47 and 76–119; these read EYDH…TLDE and AVEV…DRET.

It belongs to the MraZ family. Forms oligomers.

Its subcellular location is the cytoplasm. The protein localises to the nucleoid. The polypeptide is Transcriptional regulator MraZ (Staphylococcus aureus (strain Mu3 / ATCC 700698)).